Here is a 150-residue protein sequence, read N- to C-terminus: Urease accessory protein UreE (150 aa).

Belongs to the UreE family.

The protein resides in the cytoplasm. Involved in urease metallocenter assembly. Binds nickel. Probably functions as a nickel donor during metallocenter assembly. The protein is Urease accessory protein UreE of Staphylococcus epidermidis (strain ATCC 35984 / DSM 28319 / BCRC 17069 / CCUG 31568 / BM 3577 / RP62A).